A 239-amino-acid chain; its full sequence is Regulator of G-protein signaling 20 (239 aa).

The tract at residues 1–29 (MRTANGGPRARASPSASPADPGLPEGSER) is disordered. Over residues 8–19 (PRARASPSASPA) the composition is skewed to low complexity. An RGS domain is found at 113–229 (SFDNLMVTPA…MNSTVYKDLL (117 aa)).

Forms a complex with G(alpha)z/i2 subunits and mu-opioid receptors; the formation of this complex results in mu-opioid receptor desensitization. Interacts with OPRM1. Fatty acylated. Heavily palmitoylated in the cysteine string motif. Post-translationally, N- and O-glycosylated in synapsomal membranes. In terms of processing, serine phosphorylated in synapsomal membranes. Sumoylated with SUMO1, SUMO2 and SUMO3. Sumoylation increases binding to the G-proteins, G(alpha)-i2 and G(z), and interaction with mu-opioid receptors.

The protein resides in the membrane. The protein localises to the nucleus. It is found in the cytoplasm. Inhibits signal transduction by increasing the GTPase activity of G protein alpha subunits thereby driving them into their inactive GDP-bound form. Binds selectively to G(z)-alpha and G(alpha)-i2 subunits, accelerates their GTPase activity and regulates their signaling activities. The G(z)-alpha activity is inhibited by the phosphorylation and palmitoylation of the G-protein. Negatively regulates mu-opioid receptor-mediated activation of the G-proteins. The chain is Regulator of G-protein signaling 20 (Rgs20) from Mus musculus (Mouse).